Here is a 263-residue protein sequence, read N- to C-terminus: Indole-3-glycerol phosphate synthase (263 aa).

Belongs to the TrpC family.

It carries out the reaction 1-(2-carboxyphenylamino)-1-deoxy-D-ribulose 5-phosphate + H(+) = (1S,2R)-1-C-(indol-3-yl)glycerol 3-phosphate + CO2 + H2O. It participates in amino-acid biosynthesis; L-tryptophan biosynthesis; L-tryptophan from chorismate: step 4/5. This is Indole-3-glycerol phosphate synthase from Sulfurimonas denitrificans (strain ATCC 33889 / DSM 1251) (Thiomicrospira denitrificans (strain ATCC 33889 / DSM 1251)).